Consider the following 477-residue polypeptide: Dihydrolipoyl dehydrogenase 3 (477 aa).

FAD contacts are provided by residues 39–47 (EKGEYGGAC), lysine 56, and alanine 118. Cysteine 47 and cysteine 52 are joined by a disulfide. NAD(+)-binding positions include 186-190 (GAGYI), glutamate 209, and 279-282 (AVGR). Aspartate 322 and alanine 330 together coordinate FAD. Histidine 454 functions as the Proton acceptor in the catalytic mechanism.

It belongs to the class-I pyridine nucleotide-disulfide oxidoreductase family. As to quaternary structure, homodimer. Requires FAD as cofactor.

It is found in the cytoplasm. The enzyme catalyses N(6)-[(R)-dihydrolipoyl]-L-lysyl-[protein] + NAD(+) = N(6)-[(R)-lipoyl]-L-lysyl-[protein] + NADH + H(+). This is Dihydrolipoyl dehydrogenase 3 (lpdA3) from Haloarcula marismortui (strain ATCC 43049 / DSM 3752 / JCM 8966 / VKM B-1809) (Halobacterium marismortui).